A 358-amino-acid polypeptide reads, in one-letter code: Heavy metal-associated isoprenylated plant protein 37 (358 aa).

Residues 12–75 enclose the HMA domain; sequence IQTFSLRVNI…KLVKAGKHAE (64 aa). A metal cation-binding residues include Cys23 and Cys26. Disordered regions lie at residues 100 to 194 and 332 to 358; these read QKGQ…QNTQ and QQQS…CNIM. Residues 128-141 show a composition bias toward acidic residues; it reads AEEDGDGSEEEDGD. Positions 148 to 181 are enriched in low complexity; that stretch reads ANQQQQQNVVNAKKNSGGAAMNNGNNGVNAASKK. Polar residues-rich tracts occupy residues 184–194 and 339–358; these read QKQSNHNQNTQ and HATN…CNIM. Cys355 is modified (cysteine methyl ester). Cys355 is lipidated: S-farnesyl cysteine. The propeptide at 356-358 is removed in mature form; that stretch reads NIM.

It belongs to the HIPP family.

Heavy-metal-binding protein. The polypeptide is Heavy metal-associated isoprenylated plant protein 37 (Arabidopsis thaliana (Mouse-ear cress)).